The chain runs to 155 residues: Large ribosomal subunit protein uL16 (155 aa).

The segment at 1–22 (MLSPKRTKYRKQQRGRMKGKAT) is disordered.

The protein belongs to the universal ribosomal protein uL16 family. Part of the 50S ribosomal subunit.

Its function is as follows. Binds 23S rRNA and is also seen to make contacts with the A and possibly P site tRNAs. This Synechococcus sp. (strain JA-2-3B'a(2-13)) (Cyanobacteria bacterium Yellowstone B-Prime) protein is Large ribosomal subunit protein uL16.